Reading from the N-terminus, the 192-residue chain is uncharacterized protein (192 aa).

The first 17 residues, 1-17 (MFKKILFPLVALFMLAG), serve as a signal peptide directing secretion. The N-palmitoyl cysteine moiety is linked to residue cysteine 18. Cysteine 18 carries S-diacylglycerol cysteine lipidation.

This sequence to H.influenzae HI_0162.

It localises to the cell membrane. This is an uncharacterized protein from Escherichia coli O6:H1 (strain CFT073 / ATCC 700928 / UPEC).